Here is a 210-residue protein sequence, read N- to C-terminus: Probable GTP-binding protein EngB (210 aa).

In terms of domain architecture, EngB-type G spans 25–199 (TGIEVAFAGR…RQKLDTWFSE (175 aa)). GTP-binding positions include 33–40 (GRSNAGKS), 60–64 (GRTQL), 78–81 (DLPG), 145–148 (TKTD), and 178–180 (FSS). Mg(2+) contacts are provided by S40 and T62.

Belongs to the TRAFAC class TrmE-Era-EngA-EngB-Septin-like GTPase superfamily. EngB GTPase family. Requires Mg(2+) as cofactor.

In terms of biological role, necessary for normal cell division and for the maintenance of normal septation. In Escherichia coli O6:K15:H31 (strain 536 / UPEC), this protein is Probable GTP-binding protein EngB.